Consider the following 358-residue polypeptide: Plancitoxin-1 (358 aa).

Positions 1–26 (MPSSVIMFTFLALTVLTAVMVGTSEA) are cleaved as a signal peptide. N274 carries an N-linked (GlcNAc...) asparagine glycan. Residue H303 is part of the active site.

This sequence belongs to the DNase II family. In terms of assembly, plancitoxin is a heterodimer of alpha and beta subunits; disulfide-linked by a single disulfide bond. Venom gland.

It is found in the secreted. It catalyses the reaction Endonucleolytic cleavage to nucleoside 3'-phosphates and 3'-phosphooligonucleotide end-products.. In terms of biological role, hydrolyzes DNA with an optimum pH of 7.2. Is potently hepatotoxic. It induces caspase-independent apoptosis (on rat liver cells) through the following procedure: binding to a specific receptor in the cytoplasmic membrane, entering the cell, entering the nucleus and degrading DNA. The chain is Plancitoxin-1 from Acanthaster planci (Crown-of-thorns starfish).